A 416-amino-acid polypeptide reads, in one-letter code: ORC1-type DNA replication protein 9 (416 aa).

ATP-binding positions include 79-83, Tyr226, and Arg238; that span reads SGKSL.

Belongs to the CDC6/cdc18 family.

Its function is as follows. Involved in regulation of DNA replication. The polypeptide is ORC1-type DNA replication protein 9 (cdc6i) (Haloarcula marismortui (strain ATCC 43049 / DSM 3752 / JCM 8966 / VKM B-1809) (Halobacterium marismortui)).